Consider the following 161-residue polypeptide: Glycine cleavage system H protein 2 (161 aa).

In terms of domain architecture, Lipoyl-binding spans 34 to 116 (TVTVGVTDIG…YGEGWIAKLK (83 aa)). Lys75 carries the N6-lipoyllysine modification.

Belongs to the GcvH family. In terms of assembly, the glycine cleavage system is composed of four proteins: P, T, L and H. It depends on (R)-lipoate as a cofactor.

The glycine cleavage system catalyzes the degradation of glycine. The H protein shuttles the methylamine group of glycine from the P protein to the T protein. The chain is Glycine cleavage system H protein 2 from Aquifex aeolicus (strain VF5).